Consider the following 61-residue polypeptide: Bactericidin B-5P (61 aa).

The first 22 residues, 1–22, serve as a signal peptide directing secretion; that stretch reads MNFSRVLFFVFACLSAFAMASA. A propeptide spans 23–24 (removed by a dipeptidylpeptidase); sequence AP. Gly60 is modified (glycine amide).

It belongs to the cecropin family.

It is found in the secreted. Cecropins have lytic and antibacterial activity against several Gram-positive and Gram-negative bacteria. In Manduca sexta (Tobacco hawkmoth), this protein is Bactericidin B-5P.